The sequence spans 361 residues: tRNA-specific 2-thiouridylase MnmA (361 aa).

ATP contacts are provided by residues 8 to 15 (AMSGGVDS) and methionine 34. Cysteine 104 serves as the catalytic Nucleophile. The cysteines at positions 104 and 202 are disulfide-linked. Glycine 128 contacts ATP. The interaction with tRNA stretch occupies residues 152–154 (KDQ). The Cysteine persulfide intermediate role is filled by cysteine 202. The segment at 307–308 (RY) is interaction with tRNA.

Belongs to the MnmA/TRMU family.

The protein localises to the cytoplasm. The enzyme catalyses S-sulfanyl-L-cysteinyl-[protein] + uridine(34) in tRNA + AH2 + ATP = 2-thiouridine(34) in tRNA + L-cysteinyl-[protein] + A + AMP + diphosphate + H(+). Functionally, catalyzes the 2-thiolation of uridine at the wobble position (U34) of tRNA, leading to the formation of s(2)U34. This chain is tRNA-specific 2-thiouridylase MnmA, found in Caldicellulosiruptor saccharolyticus (strain ATCC 43494 / DSM 8903 / Tp8T 6331).